A 100-amino-acid chain; its full sequence is Small ribosomal subunit protein uS14c (100 aa).

The protein belongs to the universal ribosomal protein uS14 family. In terms of assembly, part of the 30S ribosomal subunit.

Its subcellular location is the plastid. It is found in the chloroplast. Its function is as follows. Binds 16S rRNA, required for the assembly of 30S particles. This Cryptomeria japonica (Japanese cedar) protein is Small ribosomal subunit protein uS14c.